A 196-amino-acid chain; its full sequence is ATP-dependent Clp protease proteolytic subunit (196 aa).

Ser-101 acts as the Nucleophile in catalysis. The active site involves His-126.

It belongs to the peptidase S14 family. As to quaternary structure, component of the chloroplastic Clp protease core complex.

The protein resides in the plastid. It is found in the chloroplast stroma. It catalyses the reaction Hydrolysis of proteins to small peptides in the presence of ATP and magnesium. alpha-casein is the usual test substrate. In the absence of ATP, only oligopeptides shorter than five residues are hydrolyzed (such as succinyl-Leu-Tyr-|-NHMec, and Leu-Tyr-Leu-|-Tyr-Trp, in which cleavage of the -Tyr-|-Leu- and -Tyr-|-Trp bonds also occurs).. Its function is as follows. Cleaves peptides in various proteins in a process that requires ATP hydrolysis. Has a chymotrypsin-like activity. Plays a major role in the degradation of misfolded proteins. The polypeptide is ATP-dependent Clp protease proteolytic subunit (Lobularia maritima (Sweet alyssum)).